Here is a 255-residue protein sequence, read N- to C-terminus: ParA family protein CT_582 (255 aa).

Belongs to the ParA family.

This is ParA family protein CT_582 from Chlamydia trachomatis serovar D (strain ATCC VR-885 / DSM 19411 / UW-3/Cx).